The following is a 369-amino-acid chain: Leucine carboxyl methyltransferase 1 (369 aa).

Residues Arg84, Gly108, Asp132, 187 to 188 (DL), and Glu215 contribute to the S-adenosyl-L-methionine site.

Belongs to the methyltransferase superfamily. LCMT family.

The catalysed reaction is [phosphatase 2A protein]-C-terminal L-leucine + S-adenosyl-L-methionine = [phosphatase 2A protein]-C-terminal L-leucine methyl ester + S-adenosyl-L-homocysteine. Methylates the carboxyl group of the C-terminal leucine residue of protein phosphatase 2A catalytic subunits to form alpha-leucine ester residues. This Debaryomyces hansenii (strain ATCC 36239 / CBS 767 / BCRC 21394 / JCM 1990 / NBRC 0083 / IGC 2968) (Yeast) protein is Leucine carboxyl methyltransferase 1 (PPM1).